The primary structure comprises 281 residues: 2,3,4,5-tetrahydropyridine-2,6-dicarboxylate N-succinyltransferase (281 aa).

Substrate is bound by residues Arg-108 and Asp-145.

This sequence belongs to the transferase hexapeptide repeat family. In terms of assembly, homotrimer.

It localises to the cytoplasm. It catalyses the reaction (S)-2,3,4,5-tetrahydrodipicolinate + succinyl-CoA + H2O = (S)-2-succinylamino-6-oxoheptanedioate + CoA. It participates in amino-acid biosynthesis; L-lysine biosynthesis via DAP pathway; LL-2,6-diaminopimelate from (S)-tetrahydrodipicolinate (succinylase route): step 1/3. This Rhodopseudomonas palustris (strain BisB5) protein is 2,3,4,5-tetrahydropyridine-2,6-dicarboxylate N-succinyltransferase.